We begin with the raw amino-acid sequence, 467 residues long: Argininosuccinate lyase (467 aa).

The protein belongs to the lyase 1 family. Argininosuccinate lyase subfamily.

It localises to the cytoplasm. It catalyses the reaction 2-(N(omega)-L-arginino)succinate = fumarate + L-arginine. It functions in the pathway amino-acid biosynthesis; L-arginine biosynthesis; L-arginine from L-ornithine and carbamoyl phosphate: step 3/3. The chain is Argininosuccinate lyase from Chromohalobacter salexigens (strain ATCC BAA-138 / DSM 3043 / CIP 106854 / NCIMB 13768 / 1H11).